The primary structure comprises 478 residues: E3 ubiquitin-protein ligase makorin-1 (478 aa).

3 C3H1-type zinc fingers span residues 51–78 (WTKQ…HDLS), 80–107 (SQSA…HTKP), and 204–231 (EMKK…HGDA). The tract at residues 232–259 (CDMCGLQVLHPVDAAQRSQHIKSCIEAH) is makorin-type Cys-His. The RING-type zinc-finger motif lies at 277–331 (CGICMEVVYEKANPSERRFGILSNCNHTYCLKCIRKWRSAKQFESKIIKSCPECR). Residues 360–389 (AMSNKPCRYFDEGRGSCPFGGNCFYKHAYP) form a C3H1-type 4 zinc finger.

Interacts with p53/TP53 and CDKN1A. Interacts with TERT, modulating telomere length homeostasis. Auto-ubiquitinated; which leads to proteasomal degradation.

The enzyme catalyses S-ubiquitinyl-[E2 ubiquitin-conjugating enzyme]-L-cysteine + [acceptor protein]-L-lysine = [E2 ubiquitin-conjugating enzyme]-L-cysteine + N(6)-ubiquitinyl-[acceptor protein]-L-lysine.. It functions in the pathway protein modification; protein ubiquitination. Functionally, E3 ubiquitin ligase catalyzing the covalent attachment of ubiquitin moieties onto substrate proteins. These substrates include FILIP1, p53/TP53, CDKN1A and TERT. Keeps cells alive by suppressing p53/TP53 under normal conditions, but stimulates apoptosis by repressing CDKN1A under stress conditions. Acts as a negative regulator of telomerase. Has negative and positive effects on RNA polymerase II-dependent transcription. This Notamacropus eugenii (Tammar wallaby) protein is E3 ubiquitin-protein ligase makorin-1 (MKRN1).